A 641-amino-acid polypeptide reads, in one-letter code: MMVESESIRSTPTSQNGVGSLPNQSDSCVGREGSGSGETNGELNPAELLHFQQQQALQMARQLLLQQATCLNSPSTDNKQPSVQVPVSVAMMSPQMITPQQMQQILSPAQLQAVLQQQQALMLQQLQEYYKKQQEQLHLQLLSQQQAGKQQPKELALGNKQLAFQQQLLQMQQLQQQHLINLQRQNLVGLQSGQGPVPMQSLPQVSPSDLHQLLKEMSSSQEESSKQDTVDLMTSITTSFPTTKVSPPTMHPSLSNGQNTRRESTSHYESSHLLYGHGECRWPGCEALCEDMGQFIKHLNTEHALDDRSTAQCRVQMQVVQQLEIQLAKESERLQAMMTHLHMRPSEPKPFSQPLNLVSSASNNKMSHDTFPDGLPQPPTSATAPITPLRQGTSVISSSSLPSVGPVRRRIVDKFCTPISSELAQNHEFYKNAEVRPPFTYASLIRQAILETPDRQLTLNEIYNWFTRMFAYFRRNTATWKNAVRHNLSLHKCFVRVENVKGAVWTVDELEYQKRRPPKMTGSPTLVKNMISGLGYSALNASYQAALAESSFPLLNSPPLHNSSGSVLHGGHDDVTSTGEPGNSNGSSPRLSPQYSQSIHVKEEPAEDDVRPASISAPTNQTTVLPEDRDLESESPMEDLP.

Disordered regions lie at residues 1-43 (MMVE…NGEL) and 239-264 (SFPT…RRES). Polar residues-rich tracts occupy residues 8–27 (IRST…QSDS) and 239–259 (SFPT…NGQN). A C2H2-type zinc finger spans residues 278–303 (GECRWPGCEALCEDMGQFIKHLNTEH). A leucine-zipper region spans residues 320 to 341 (VQQLEIQLAKESERLQAMMTHL). The tract at residues 354–358 (PLNLV) is ctbp1-binding. Residues 436-526 (RPPFTYASLI…PPKMTGSPTL (91 aa)) constitute a DNA-binding region (fork-head). Residues 563 to 641 (SSGSVLHGGH…ESESPMEDLP (79 aa)) form a disordered region. The segment covering 576 to 599 (TSTGEPGNSNGSSPRLSPQYSQSI) has biased composition (polar residues). A compositionally biased stretch (basic and acidic residues) spans 600-611 (HVKEEPAEDDVR). Residues 629–641 (RDLESESPMEDLP) are compositionally biased toward acidic residues.

As to quaternary structure, dimerization is required for DNA-binding. As to expression, first expressed in the anterior neural field of stage 15 embryos. At stage 18, localized in three domains of the brain (rostral forebrain, midbrain and hindbrain) and in the eye anlage. Cerebral and retinal expression persists at later stages with additional expression in the branchial arches, at the base of the hatching gland, and in the pancreas.

It is found in the nucleus. Functionally, transcriptional repressor. The protein is Forkhead box protein P4 of Xenopus laevis (African clawed frog).